A 193-amino-acid chain; its full sequence is uncharacterized protein (193 aa).

A helical transmembrane segment spans residues 119–143 (LAGSLLAATGMTLGIFGMGITGTCW).

It localises to the mitochondrion membrane. This is an uncharacterized protein from Saccharomyces cerevisiae (strain ATCC 204508 / S288c) (Baker's yeast).